The chain runs to 185 residues: Ribosome-recycling factor (185 aa).

It belongs to the RRF family.

It is found in the cytoplasm. In terms of biological role, responsible for the release of ribosomes from messenger RNA at the termination of protein biosynthesis. May increase the efficiency of translation by recycling ribosomes from one round of translation to another. The protein is Ribosome-recycling factor of Hamiltonella defensa subsp. Acyrthosiphon pisum (strain 5AT).